The primary structure comprises 331 residues: Ketol-acid reductoisomerase (NADP(+)) (331 aa).

The KARI N-terminal Rossmann domain occupies 2 to 182; that stretch reads ARMYYDADAN…GGTRAGILET (181 aa). Residues 25 to 28, Ser-51, Ser-53, and 83 to 86 contribute to the NADP(+) site; these read YGSQ and DEVQ. His-108 is a catalytic residue. Gly-134 is a binding site for NADP(+). A KARI C-terminal knotted domain is found at 183-328; the sequence is SFREETETDL…KDLRAMFSWL (146 aa). Mg(2+)-binding residues include Asp-191, Glu-195, Glu-227, and Glu-231. Ser-252 contacts substrate.

It belongs to the ketol-acid reductoisomerase family. Mg(2+) serves as cofactor.

The enzyme catalyses (2R)-2,3-dihydroxy-3-methylbutanoate + NADP(+) = (2S)-2-acetolactate + NADPH + H(+). It carries out the reaction (2R,3R)-2,3-dihydroxy-3-methylpentanoate + NADP(+) = (S)-2-ethyl-2-hydroxy-3-oxobutanoate + NADPH + H(+). It functions in the pathway amino-acid biosynthesis; L-isoleucine biosynthesis; L-isoleucine from 2-oxobutanoate: step 2/4. The protein operates within amino-acid biosynthesis; L-valine biosynthesis; L-valine from pyruvate: step 2/4. Its function is as follows. Involved in the biosynthesis of branched-chain amino acids (BCAA). Catalyzes an alkyl-migration followed by a ketol-acid reduction of (S)-2-acetolactate (S2AL) to yield (R)-2,3-dihydroxy-isovalerate. In the isomerase reaction, S2AL is rearranged via a Mg-dependent methyl migration to produce 3-hydroxy-3-methyl-2-ketobutyrate (HMKB). In the reductase reaction, this 2-ketoacid undergoes a metal-dependent reduction by NADPH to yield (R)-2,3-dihydroxy-isovalerate. The polypeptide is Ketol-acid reductoisomerase (NADP(+)) (Crocosphaera subtropica (strain ATCC 51142 / BH68) (Cyanothece sp. (strain ATCC 51142))).